A 173-amino-acid chain; its full sequence is Large ribosomal subunit protein bL12m (173 aa).

The N-terminal 33 residues, 1–33 (MFRIASRQTRNLRALSSSKNWARSLVNTRSFRA), are a transit peptide targeting the mitochondrion.

It belongs to the bacterial ribosomal protein bL12 family. Component of the mitochondrial large ribosomal subunit (mt-LSU). Mature yeast 74S mitochondrial ribosomes consist of a small (37S) and a large (54S) subunit. The 37S small subunit contains a 15S ribosomal RNA (15S mt-rRNA) and at least 32 different proteins. The 54S large subunit contains a 21S rRNA (21S mt-rRNA) and at least 45 different proteins.

It localises to the mitochondrion. In terms of biological role, component of the mitochondrial ribosome (mitoribosome), a dedicated translation machinery responsible for the synthesis of mitochondrial genome-encoded proteins, including at least some of the essential transmembrane subunits of the mitochondrial respiratory chain. The mitoribosomes are attached to the mitochondrial inner membrane and translation products are cotranslationally integrated into the membrane. The protein is Large ribosomal subunit protein bL12m (mrpl12) of Schizosaccharomyces pombe (strain 972 / ATCC 24843) (Fission yeast).